Consider the following 675-residue polypeptide: Zinc finger protein 526 (675 aa).

3 C2H2-type zinc fingers span residues 56–78 (FMCS…QEQH), 108–130 (FQCG…QDAH), and 140–163 (YQCG…KTQH). A disordered region spans residues 160-195 (KTQHLSSAADEPPSPLPPPTPPPPPPPPPPPPPPEV). Residues 171 to 194 (PPSPLPPPTPPPPPPPPPPPPPPE) show a composition bias toward pro residues. The segment at 200–222 (YECPECSTLCATPEEFLEHQGTH) adopts a C2H2-type 4 zinc-finger fold. Residues 225-234 (SLEKEEHNGL) show a composition bias toward basic and acidic residues. The segment at 225–283 (SLEKEEHNGLEEEEEDEEEGEEEEDDDDEETDEEEASSELTADDTGSNKSTADSAQSCG) is disordered. Residues 235-261 (EEEEEDEEEGEEEEDDDDEETDEEEAS) are compositionally biased toward acidic residues. Residues 269–281 (TGSNKSTADSAQS) are compositionally biased toward polar residues. 4 C2H2-type zinc fingers span residues 312–334 (FHCS…GRAH), 339–361 (HECT…QRLH), 367–389 (YLCV…RRAH), and 395–416 (HRCR…RRTH). The interval 415–439 (THTGKSGTPTRVATVSPAPAEPTPP) is disordered. Polar residues predominate over residues 418-427 (GKSGTPTRVA). 5 C2H2-type zinc fingers span residues 447-470 (LPCP…RAVH), 477-499 (HRCG…LRTH), 505-527 (FQCH…QLTH), 533-555 (YQCL…RRLH), and 578-600 (YYCG…QRVH). The segment at 606–625 (LTLQPPRSPSPVPPPPPEPQ) is disordered. Residues 611–624 (PRSPSPVPPPPPEP) show a composition bias toward pro residues.

It belongs to the krueppel C2H2-type zinc-finger protein family.

It localises to the nucleus. In terms of biological role, may be involved in transcriptional regulation. The sequence is that of Zinc finger protein 526 (Znf526) from Mus musculus (Mouse).